A 403-amino-acid chain; its full sequence is 8-amino-7-oxononanoate synthase (403 aa).

R25 is a binding site for substrate. 112–113 (GY) serves as a coordination point for pyridoxal 5'-phosphate. Residue H137 coordinates substrate. Pyridoxal 5'-phosphate contacts are provided by S182, H210, and T239. N6-(pyridoxal phosphate)lysine is present on K242. T358 serves as a coordination point for substrate.

Belongs to the class-II pyridoxal-phosphate-dependent aminotransferase family. BioF subfamily. As to quaternary structure, homodimer. The cofactor is pyridoxal 5'-phosphate.

The catalysed reaction is 6-carboxyhexanoyl-[ACP] + L-alanine + H(+) = (8S)-8-amino-7-oxononanoate + holo-[ACP] + CO2. The protein operates within cofactor biosynthesis; biotin biosynthesis. Catalyzes the decarboxylative condensation of pimeloyl-[acyl-carrier protein] and L-alanine to produce 8-amino-7-oxononanoate (AON), [acyl-carrier protein], and carbon dioxide. In Marinomonas sp. (strain MWYL1), this protein is 8-amino-7-oxononanoate synthase.